The following is a 1005-amino-acid chain: Defense-associated sirtuin 2 (1005 aa).

Positions 1–295 (MVKVDLESKR…YSAVMDLLIE (295 aa)) are SIR2. The segment at 56-111 (YPQWWRLVDKYHEELYGSPKKGNYSSDEYLRIPQIFYNVKGEMAFDGILKDFFQVD) is inter-dimer interaction. Catalysis depends on residues Tyr134, Asp135, and His171. Positions 296 to 548 (SQENKFITKD…YKILEFLSDN (253 aa)) are MID. The tract at residues 549 to 1005 (QFLYDDTVKL…YLEILMNYFI (457 aa)) is CTD.

In terms of assembly, homotetramer (dimer of dimers). Homodimer. The SIR2 domains are arranged in a central core, adopting a head-to-head arrangement, while the CTDs are positioned at the periphery of the complex. Tetramerization is necessary for the activation of NADase activity. The NADase enzymatic activity of this homotetrameric form is autoinhibited. The activated form of DSR2 (after binding to the phage tube protein) exists as tetramers and dimers, with the tetramers exhibiting more NADase activity. Each tetramer binds 4 NAD(+) molecules. As to quaternary structure, (Microbial infection) Interacts (via C-terminus) with phage SPR tail tube monomer protein (via N-terminus) in a 4:4 DSR2-Tube assembly; this interaction induces a conformation change of the tube protein and activates the NADase activity of DSR2. (Microbial infection) Interacts (via C-terminus) with phage SPbeta DSAD1 in a 4:2 ratio; this interaction prevents activation of the NADase defense activity of DSR2.

It catalyses the reaction NAD(+) + H2O = ADP-D-ribose + nicotinamide + H(+). (Microbial infection) NADase activity is activated through the binding of SPR phage tail tube monomer protein. NADase activity is inhibited through the binding to the phage SPbeta DSR anti-defense 1 (DSAD1). Anti-phage defense protein that is activated through the binding to the phage tail tube protein monomer and which hydrolyzes NAD+ upon activation (NADase activity). The resulting depletion of NAD(+) leads to an abortive infection. The sequence is that of Defense-associated sirtuin 2 from Bacillus subtilis.